A 427-amino-acid polypeptide reads, in one-letter code: MASVIIVGTQWGDEGKGKIVDYLAENCEYVVRSQGGSNAGHTVVVDNIKYKLRLLPSGILHKDKVCVIGNGVVIEPKVFLSEIDSLIEKKVNISNLKISDRAHVLMPYHKILDELQEEDLGENKLGTTKNGIGPCYMDKSSRLGIRIVDLMNKETFAKKLKFNVELKNKLLKKLYNHDGVNYDELLKEYLGYAEKLRPFVADTTTILNKAIKEKKNILFEGAQATMLDLDHGTYPFVTSSYPAAGGACTGSGVGPRKIDNVIGVVKAYATRVGEGPFPSELFDDVGQFIRDKGGEYGTVTGRARRCGWLDACVVKYASYVNGLDSIAITRLDILDELDKLKICVAYKYNSEILEGYPADLDILSKVEPVYEEFEGWKTSTRDIREYDKLPENAKKYLKRLSEVIETDISIVSVGAGRDETIIVKKIF.

GTP contacts are provided by residues 12–18 (GDEGKGK) and 40–42 (GHT). Asp-13 functions as the Proton acceptor in the catalytic mechanism. 2 residues coordinate Mg(2+): Asp-13 and Gly-40. Residues 13-16 (DEGK), 38-41 (NAGH), Thr-128, Arg-142, Gln-223, Thr-238, and Arg-302 each bind IMP. The Proton donor role is filled by His-41. Substrate is bound at residue 298–304 (TVTGRAR). GTP is bound by residues Arg-304, 330–332 (RLD), and 412–414 (SVG).

This sequence belongs to the adenylosuccinate synthetase family. Homodimer. Mg(2+) is required as a cofactor.

The protein resides in the cytoplasm. The enzyme catalyses IMP + L-aspartate + GTP = N(6)-(1,2-dicarboxyethyl)-AMP + GDP + phosphate + 2 H(+). The protein operates within purine metabolism; AMP biosynthesis via de novo pathway; AMP from IMP: step 1/2. Plays an important role in the de novo pathway of purine nucleotide biosynthesis. Catalyzes the first committed step in the biosynthesis of AMP from IMP. The protein is Adenylosuccinate synthetase of Brachyspira hyodysenteriae (strain ATCC 49526 / WA1).